A 1009-amino-acid polypeptide reads, in one-letter code: Adhesion G-protein coupled receptor G2 (1009 aa).

Positions 1-37 (MLFSGGQYSPVGRPEEVLLIYKIFLVIICFHVILVTS) are cleaved as a signal peptide. Residues 38-617 (LKENGNSSLL…SRTSLPPSQM (580 aa)) lie on the Extracellular side of the membrane. N-linked (GlcNAc...) asparagine glycans are attached at residues asparagine 43, asparagine 77, asparagine 91, asparagine 103, asparagine 109, asparagine 127, asparagine 136, asparagine 154, asparagine 178, and asparagine 186. Disordered stretches follow at residues 279 to 305 (MTPSTPSLTQESNLPSPQPTIPLASSP) and 325 to 346 (SHTLSPVQSSIPSPTTPAPSVP). A compositionally biased stretch (polar residues) spans 280 to 293 (TPSTPSLTQESNLP). Asparagine 362, asparagine 427, asparagine 448, asparagine 453, asparagine 520, asparagine 534, asparagine 539, asparagine 543, and asparagine 589 each carry an N-linked (GlcNAc...) asparagine glycan. The GAIN-B domain maps to 453 to 611 (NTTTFAAQDP…GILLDLSRTS (159 aa)). 2 disulfides stabilise this stretch: cysteine 562–cysteine 593 and cysteine 581–cysteine 595. The tract at residues 562 to 611 (CVFWDLGRNGGKGGWSSDGCSVKDKRMNETICTCSHLTSFGILLDLSRTS) is GPS. The segment at 600-611 (SFGILLDLSRTS) is stachel. The chain crosses the membrane as a helical span at residues 618–640 (MALTFITYIGCGLSSIFLSVTLV). Residues 641–655 (TYIAFEKIRRDYPSK) are Cytoplasmic-facing. Residues 656-679 (ILIQLCAALLLLNLIFLLDSWIAL) traverse the membrane as a helical segment. Topologically, residues 680–683 (YNTR) are extracellular. The helical transmembrane segment at 684 to 709 (GFCIAVAVFLHYFLLVSFTWMGLEAF) threads the bilayer. Cysteine 686 and cysteine 770 are disulfide-bonded. Over 710–728 (HMYLALVKVFNTYIRKYIL) the chain is Cytoplasmic. The chain crosses the membrane as a helical span at residues 729–751 (KFCIVGWGIPAVVVSIVLTISPD). At 752 to 776 (NYGIGSYGKFPNGTPDDFCWINSNV) the chain is on the extracellular side. Residues 777-802 (VFYITVVGYFCVIFLLNVSMFIVVLV) traverse the membrane as a helical segment. Topologically, residues 803–823 (QLCRIKKKKQLGAQRKTSIQD) are cytoplasmic. A helical transmembrane segment spans residues 824 to 845 (LRSIAGLTFLLGITWGFAFFAW). Over 846–850 (GPVNV) the chain is Extracellular. N-linked (GlcNAc...) asparagine glycosylation is present at asparagine 849. A helical membrane pass occupies residues 851–872 (TFMYLFAIFNTLQGFFIFIFYC). Asparagine 860 contributes to the 3beta-hydroxyandrost-5-en-17-one binding site. Residues 873–1009 (AAKENVRKQW…RGSLHFIEQM (137 aa)) lie on the Cytoplasmic side of the membrane. Phosphoserine is present on serine 1002.

It belongs to the G-protein coupled receptor 2 family. Adhesion G-protein coupled receptor (ADGR) subfamily. In terms of assembly, heterodimer of 2 chains generated by proteolytic processing; the large extracellular N-terminal fragment and the membrane-bound C-terminal fragment predominantly remain associated and non-covalently linked. Interacts with CFTR. Proteolytically cleaved into 2 subunits, an extracellular subunit and a seven-transmembrane subunit. Post-translationally, highly glycosylated. Epididymis-specific expression (at protein level). Associated with apical membranes of efferent ductule and proximal epididymal duct epithelia. Mainly expressed in the nonciliated principal cells of the proximal excurrent ducts.

Its subcellular location is the apical cell membrane. Forms a heterodimer of 2 chains generated by proteolytic processing that remain associated through non-covalent interactions mediated by the GAIN-B domain. In the inactivated receptor, the Stachel sequence (also named stalk) is embedded in the GAIN-B domain, where it adopts a beta-strand conformation. On activation, the Stachel moves into the 7 transmembrane region and adopts a twisted hook-shaped configuration that forms contacts within the receptor, leading to coupling of a G-alpha protein, which activates signaling. The cleaved GAIN-B and N-terminal domains can then dissociate from the rest of the receptor. Deoxycorticosterone (DOC) acts as an antagonist of ADGRG2. Functionally, adhesion G-protein coupled receptor (aGPCR) for steroid hormones, such as dehydroepiandrosterone (DHEA; also named 3beta-hydroxyandrost-5-en-17-one) and androstenedione. Involved in a signal transduction pathway controlling epididymal function and male fertility. Ligand binding causes a conformation change that triggers signaling via guanine nucleotide-binding proteins (G proteins) and modulates the activity of downstream effectors, such as adenylate cyclase. ADGRG2 is coupled to G(s) G proteins and mediates activation of adenylate cyclase activity. Also able to couple with G(q) G proteins in vitro. May regulate fluid exchange within epididymis. The sequence is that of Adhesion G-protein coupled receptor G2 from Mus musculus (Mouse).